The primary structure comprises 243 residues: tRNA pseudouridine synthase A (243 aa).

Residue Asp-51 is the Nucleophile of the active site. Tyr-111 is a substrate binding site.

It belongs to the tRNA pseudouridine synthase TruA family. Homodimer.

The catalysed reaction is uridine(38/39/40) in tRNA = pseudouridine(38/39/40) in tRNA. Its function is as follows. Formation of pseudouridine at positions 38, 39 and 40 in the anticodon stem and loop of transfer RNAs. The polypeptide is tRNA pseudouridine synthase A (Neorickettsia sennetsu (strain ATCC VR-367 / Miyayama) (Ehrlichia sennetsu)).